The chain runs to 434 residues: Chaperone SurA (434 aa).

An N-terminal signal peptide occupies residues 1–22; that stretch reads MKHSKKIVTALLALAMSQTVMA. PpiC domains are found at residues 173–274 and 283–383; these read EVEF…KVMD and VEEV…QLMD.

It localises to the periplasm. The catalysed reaction is [protein]-peptidylproline (omega=180) = [protein]-peptidylproline (omega=0). Its function is as follows. Chaperone involved in the correct folding and assembly of outer membrane proteins. Recognizes specific patterns of aromatic residues and the orientation of their side chains, which are found more frequently in integral outer membrane proteins. May act in both early periplasmic and late outer membrane-associated steps of protein maturation. The protein is Chaperone SurA of Shewanella denitrificans (strain OS217 / ATCC BAA-1090 / DSM 15013).